A 48-amino-acid polypeptide reads, in one-letter code: Probable antitoxin PhoAT (48 aa).

It belongs to the PhoAT antitoxin family. Interacts with toxin PhoH2.

Functionally, probable antitoxin component of a type II toxin-antitoxin (TA) system. The probable cognate antitoxin is PhoAT; the toxin gene can be expressed in the absence of the antitoxin gene in M.smegmatis strain mc(2)155. The sequence is that of Probable antitoxin PhoAT from Mycolicibacterium smegmatis (strain ATCC 700084 / mc(2)155) (Mycobacterium smegmatis).